The sequence spans 193 residues: Ion-translocating oxidoreductase complex subunit A (193 aa).

6 helical membrane-spanning segments follow: residues 4–24 (FFFILLSTALVNNVVLVKFLG), 39–59 (IGMGLATTFVLTLAAGASWMV), 71–91 (FLRILSLILVIAAIVQFIEVV), 102–122 (ALGIYLPLITTNCAVLGVALL), 134–154 (LLYGFGSASGFTLVLVIFAGM), and 167–187 (FAGAPIAFISAGLLSMAFMGF).

The protein belongs to the NqrDE/RnfAE family. The complex is composed of six subunits: RnfA, RnfB, RnfC, RnfD, RnfE and RnfG.

The protein resides in the cellular chromatophore membrane. Its function is as follows. Part of a membrane-bound complex that couples electron transfer with translocation of ions across the membrane. This chain is Ion-translocating oxidoreductase complex subunit A, found in Cereibacter sphaeroides (strain ATCC 17029 / ATH 2.4.9) (Rhodobacter sphaeroides).